Here is a 265-residue protein sequence, read N- to C-terminus: MPFELPQQPAPELPERWCVFNGSLLWLQDNQLPAQPPAGCALTGQRFLGIHEGSNLFLADLVGDMPAQAGEWLPLRPALLAMPMAQVQAAARAAQLRQFFHSHRFCGHCATPLAVSADQLGRHCPSCGQVYYPRISPAMMVLVRRGRELLLARSPHFAPGMYSALAGFVEPGETLEECVHRETWEEVGVKVKNLRYAFSQSWPFPHSLMLAFIAEYDGGDIRPQEGEIEDAGWFDIDALPGLPMPISIAHRLIRHACDRIRDLEA.

Arg76 contributes to the substrate binding site. Cys106, Cys109, Cys124, and Cys127 together coordinate Zn(2+). Tyr132 serves as a coordination point for substrate. The Nudix hydrolase domain occupies 133–256 (PRISPAMMVL…SIAHRLIRHA (124 aa)). Residues Ala166, Glu182, and Glu186 each contribute to the a divalent metal cation site. A Nudix box motif is present at residues 167–188 (GFVEPGETLEECVHRETWEEVG). 200–207 (QSWPFPHS) contacts substrate. Glu227 contacts a divalent metal cation. Ala249 is a substrate binding site.

The protein belongs to the Nudix hydrolase family. NudC subfamily. As to quaternary structure, homodimer. Mg(2+) is required as a cofactor. Mn(2+) serves as cofactor. It depends on Zn(2+) as a cofactor.

It catalyses the reaction a 5'-end NAD(+)-phospho-ribonucleoside in mRNA + H2O = a 5'-end phospho-adenosine-phospho-ribonucleoside in mRNA + beta-nicotinamide D-ribonucleotide + 2 H(+). The enzyme catalyses NAD(+) + H2O = beta-nicotinamide D-ribonucleotide + AMP + 2 H(+). It carries out the reaction NADH + H2O = reduced beta-nicotinamide D-ribonucleotide + AMP + 2 H(+). In terms of biological role, mRNA decapping enzyme that specifically removes the nicotinamide adenine dinucleotide (NAD) cap from a subset of mRNAs by hydrolyzing the diphosphate linkage to produce nicotinamide mononucleotide (NMN) and 5' monophosphate mRNA. The NAD-cap is present at the 5'-end of some mRNAs and stabilizes RNA against 5'-processing. Has preference for mRNAs with a 5'-end purine. Catalyzes the hydrolysis of a broad range of dinucleotide pyrophosphates. The protein is NAD-capped RNA hydrolase NudC of Chromobacterium violaceum (strain ATCC 12472 / DSM 30191 / JCM 1249 / CCUG 213 / NBRC 12614 / NCIMB 9131 / NCTC 9757 / MK).